The sequence spans 415 residues: Palmitoyl-acyl carrier protein thioesterase, chloroplastic (415 aa).

Composition is skewed to low complexity over residues 1 to 16 and 24 to 41; these read MVATAASSAFFPLPSA and KLGNKPSSLSPLKPKSTP. A chloroplast-targeting transit peptide spans 1 to 60; sequence MVATAASSAFFPLPSADTSSRPGKLGNKPSSLSPLKPKSTPNGGLQVKANASAPPKINGS. The segment at 1-81 is disordered; the sequence is MVATAASSAF…QEDAHSAPPP (81 aa). Active-site residues include N314, H316, and C351.

This sequence belongs to the acyl-ACP thioesterase family.

The protein resides in the plastid. It is found in the chloroplast. It carries out the reaction hexadecanoyl-[ACP] + H2O = hexadecanoate + holo-[ACP] + H(+). In terms of biological role, plays an essential role in chain termination during de novo fatty acid synthesis. High thioesterase activity for palmitoyl-ACP versus other acyl-ACPs. This chain is Palmitoyl-acyl carrier protein thioesterase, chloroplastic (FATB1), found in Cuphea hookeriana (Cigar plant).